Reading from the N-terminus, the 156-residue chain is Small ribosomal subunit protein uS7 (156 aa).

The protein belongs to the universal ribosomal protein uS7 family. As to quaternary structure, part of the 30S ribosomal subunit. Contacts proteins S9 and S11.

Functionally, one of the primary rRNA binding proteins, it binds directly to 16S rRNA where it nucleates assembly of the head domain of the 30S subunit. Is located at the subunit interface close to the decoding center, probably blocks exit of the E-site tRNA. This is Small ribosomal subunit protein uS7 from Syntrophobacter fumaroxidans (strain DSM 10017 / MPOB).